The following is a 456-amino-acid chain: Protein translocase subunit SecY (456 aa).

Topologically, residues 1 to 21 (MEQLKEKFEPLFSVLPQVKSP) are cytoplasmic. A helical transmembrane segment spans residues 22-48 (GYRVPFREKLKWTGIILVLYFFLAQIP). Topologically, residues 49–59 (LYGLSANAVDQ) are extracellular. An intramembrane region (helical) is located at residues 60–67 (FAQFRAVL). A discontinuously helical membrane pass occupies residues 60 to 88 (FAQFRAVLAGNFGSILTLGIGPIVSASII). The stretch at 68–79 (AGNFGSILTLGI) is an intramembrane region. Positions 80-88 (GPIVSASII) form an intramembrane region, helical. At 89 to 109 (LQLLVGGKILKLDLSRHEDKA) the chain is on the cytoplasmic side. Residues 110 to 134 (FFQGLQKLLAIVFTFFEALIFVLTG) traverse the membrane as a helical segment. The Extracellular portion of the chain corresponds to 135–141 (SLAPSAP). Residues 142–166 (QFVWVLILQLTIGGILIIFLDEVVS) traverse the membrane as a helical segment. The Cytoplasmic segment spans residues 167 to 172 (KWGFGS). A helical membrane pass occupies residues 173 to 191 (GVGLFIAAGVSQEIIVGAF). Topologically, residues 192–224 (NPLSAPTQPGVPAGRITGFLYLLFTGQSPDFQY) are extracellular. The helical transmembrane segment at 225-246 (YVLPVLALIAVFLVVVYAESMR) threads the bilayer. The Cytoplasmic segment spans residues 247–275 (VEIPISMGGGKRLSRGAVGKYPLRFIYAS). Residues 276–297 (NMPVILTSALLLNVQLLANVFQ) form a helical membrane-spanning segment. Residues 298–334 (KLGYPILGTVSNGQAVDGLAYLLTAPRSIDALILDPF) lie on the Extracellular side of the membrane. The helical transmembrane segment at 335–354 (RVVFYAVVFIGLCVLFAWLW) threads the bilayer. The Cytoplasmic segment spans residues 355 to 397 (VEISNIGPRHVARQLYQMGMQIPGFRSSRGQFEKILKRYIPTI). The chain crosses the membrane as a helical span at residues 398–416 (TILGGAFVGLLAFVADLTG). At 417–419 (SLG) the chain is on the extracellular side. The helical transmembrane segment at 420-434 (GGTGVLLTVGIVYRL) threads the bilayer. Residues 435–456 (YEEIAQEQLMDMHPILRSFLGD) are Cytoplasmic-facing.

Belongs to the SecY/SEC61-alpha family. Component of the Sec protein translocase complex. Heterotrimer consisting of alpha (SecY), beta (SecG) and gamma (SecE) subunits. The heterotrimers can form oligomers, although 1 heterotrimer is thought to be able to translocate proteins. Interacts with the ribosome. May interact with SecDF, and other proteins may be involved.

It localises to the cell membrane. In terms of biological role, the central subunit of the protein translocation channel SecYEG. Consists of two halves formed by TMs 1-5 and 6-10. These two domains form a lateral gate at the front which open onto the bilayer between TMs 2 and 7, and are clamped together by SecE at the back. The channel is closed by both a pore ring composed of hydrophobic SecY resides and a short helix (helix 2A) on the extracellular side of the membrane which forms a plug. The plug probably moves laterally to allow the channel to open. The ring and the pore may move independently. The polypeptide is Protein translocase subunit SecY (Methanothermobacter thermautotrophicus (strain ATCC 29096 / DSM 1053 / JCM 10044 / NBRC 100330 / Delta H) (Methanobacterium thermoautotrophicum)).